The following is a 279-amino-acid chain: Tryptophan 2,3-dioxygenase (279 aa).

Substrate contacts are provided by residues 48–52, Tyr-110, and Arg-114; that span reads FIVIH. His-237 contributes to the heme binding site. Thr-251 lines the substrate pocket.

Belongs to the tryptophan 2,3-dioxygenase family. As to quaternary structure, homotetramer. Heme is required as a cofactor.

The catalysed reaction is L-tryptophan + O2 = N-formyl-L-kynurenine. It participates in amino-acid degradation; L-tryptophan degradation via kynurenine pathway; L-kynurenine from L-tryptophan: step 1/2. In terms of biological role, heme-dependent dioxygenase that catalyzes the oxidative cleavage of the L-tryptophan (L-Trp) pyrrole ring and converts L-tryptophan to N-formyl-L-kynurenine. Catalyzes the oxidative cleavage of the indole moiety. This chain is Tryptophan 2,3-dioxygenase, found in Bacillus cereus (strain ZK / E33L).